A 203-amino-acid polypeptide reads, in one-letter code: Small ribosomal subunit protein uS4 (203 aa).

One can recognise an S4 RNA-binding domain in the interval 93 to 154; it reads RRFDNVVFRA…KSKNMDAVTE (62 aa).

Belongs to the universal ribosomal protein uS4 family. As to quaternary structure, part of the 30S ribosomal subunit. Contacts protein S5. The interaction surface between S4 and S5 is involved in control of translational fidelity.

One of the primary rRNA binding proteins, it binds directly to 16S rRNA where it nucleates assembly of the body of the 30S subunit. Functionally, with S5 and S12 plays an important role in translational accuracy. The chain is Small ribosomal subunit protein uS4 from Prosthecochloris aestuarii (strain DSM 271 / SK 413).